An 89-amino-acid chain; its full sequence is Large ribosomal subunit protein bL27 (89 aa).

The segment at 1-20 (MAHKKAGGSSRNGRDSAGRR) is disordered.

This sequence belongs to the bacterial ribosomal protein bL27 family.

This chain is Large ribosomal subunit protein bL27, found in Zymomonas mobilis subsp. mobilis (strain ATCC 31821 / ZM4 / CP4).